The sequence spans 596 residues: Elongation factor 4 (596 aa).

Residues 2–184 enclose the tr-type G domain; it reads KHIRNFSIIA…VIVAQIPPPE (183 aa). GTP contacts are provided by residues 14–19 and 131–134; these read DHGKST and NKID.

The protein belongs to the TRAFAC class translation factor GTPase superfamily. Classic translation factor GTPase family. LepA subfamily.

The protein resides in the cell inner membrane. It catalyses the reaction GTP + H2O = GDP + phosphate + H(+). Its function is as follows. Required for accurate and efficient protein synthesis under certain stress conditions. May act as a fidelity factor of the translation reaction, by catalyzing a one-codon backward translocation of tRNAs on improperly translocated ribosomes. Back-translocation proceeds from a post-translocation (POST) complex to a pre-translocation (PRE) complex, thus giving elongation factor G a second chance to translocate the tRNAs correctly. Binds to ribosomes in a GTP-dependent manner. The polypeptide is Elongation factor 4 (Shewanella woodyi (strain ATCC 51908 / MS32)).